The following is a 775-amino-acid chain: Thiamine repressible genes regulatory protein thi1 (775 aa).

The segment at residues 39-65 (CKHCRQKKIKCNGGQPCISCKTLNIEC) is a DNA-binding region (zn(2)-C6 fungal-type). A Phosphoserine modification is found at Ser208. Disordered stretches follow at residues 676-695 (LTGE…FQPF) and 754-775 (NVSE…EKNG).

Its subcellular location is the nucleus. Transcription factor that activates the nmt1 promoter. Regulation of thiamine repressible genes. Positively regulates conjugation during meiosis. This Schizosaccharomyces pombe (strain 972 / ATCC 24843) (Fission yeast) protein is Thiamine repressible genes regulatory protein thi1 (thi1).